A 276-amino-acid polypeptide reads, in one-letter code: MTGFGQRLDAAVSARGPLCPGIDPHPELLNAWGLTVDAEGLRAFCDICVAAFAGFAIVKPQVAFFEAYGSAGFAVLEDTIAALRAEGVLVLADAKRGDIGSTMAAYAAAWAGDSPLAADAVTASPYLGFGSLRPLLDTAVANGRGVFVLAATSNPEGVGLQRAVAGDVTVAQSIVDAVAQANREADPAARDGDPVGPFGVVVGATVADPPDLHMLGGPVLVPGVGAQGGRPEALGGLGNARRLLPAVSREVLRAGPAVDDVRAAAERLRDQVAYLA.

Catalysis depends on Lys95, which acts as the Proton donor.

The protein belongs to the OMP decarboxylase family. Type 2 subfamily.

The catalysed reaction is orotidine 5'-phosphate + H(+) = UMP + CO2. It functions in the pathway pyrimidine metabolism; UMP biosynthesis via de novo pathway; UMP from orotate: step 2/2. The chain is Orotidine 5'-phosphate decarboxylase (pyrF) from Mycolicibacterium smegmatis (strain ATCC 700084 / mc(2)155) (Mycobacterium smegmatis).